The primary structure comprises 92 residues: Small ribosomal subunit protein uS19c (92 aa).

It belongs to the universal ribosomal protein uS19 family.

It localises to the plastid. Its function is as follows. Protein S19 forms a complex with S13 that binds strongly to the 16S ribosomal RNA. This is Small ribosomal subunit protein uS19c from Cuscuta reflexa (Southern Asian dodder).